The following is a 204-amino-acid chain: Holliday junction branch migration complex subunit RuvA (204 aa).

The tract at residues 1–64 (MIGRLQGILL…EDAHLLFGFA (64 aa)) is domain I. Residues 65–143 (QKTDRTLFRE…GVKQSDFFVE (79 aa)) form a domain II region. The interval 144–155 (STHIPLSPSIES) is flexible linker. The tract at residues 156-204 (HSESSSDEAISALIALGYKPVEAEKMVKRVAKPELTSEQVIREALKAAL) is domain III.

This sequence belongs to the RuvA family. As to quaternary structure, homotetramer. Forms an RuvA(8)-RuvB(12)-Holliday junction (HJ) complex. HJ DNA is sandwiched between 2 RuvA tetramers; dsDNA enters through RuvA and exits via RuvB. An RuvB hexamer assembles on each DNA strand where it exits the tetramer. Each RuvB hexamer is contacted by two RuvA subunits (via domain III) on 2 adjacent RuvB subunits; this complex drives branch migration. In the full resolvosome a probable DNA-RuvA(4)-RuvB(12)-RuvC(2) complex forms which resolves the HJ.

It localises to the cytoplasm. In terms of biological role, the RuvA-RuvB-RuvC complex processes Holliday junction (HJ) DNA during genetic recombination and DNA repair, while the RuvA-RuvB complex plays an important role in the rescue of blocked DNA replication forks via replication fork reversal (RFR). RuvA specifically binds to HJ cruciform DNA, conferring on it an open structure. The RuvB hexamer acts as an ATP-dependent pump, pulling dsDNA into and through the RuvAB complex. HJ branch migration allows RuvC to scan DNA until it finds its consensus sequence, where it cleaves and resolves the cruciform DNA. This Haemophilus influenzae (strain PittEE) protein is Holliday junction branch migration complex subunit RuvA.